A 757-amino-acid polypeptide reads, in one-letter code: Polyribonucleotide nucleotidyltransferase (757 aa).

Mg(2+) is bound by residues Asp482 and Asp488. The region spanning 549 to 608 (PRMLSFYIDKDKISAAIGSKGKNIRSVCERSNAKIEIGDDGKVSVFATSGTEAEIAKSMM) is the KH domain. Positions 618 to 686 (GSIVDVKVVR…KGGCPKLSRR (69 aa)) constitute an S1 motif domain. The tract at residues 698-757 (GELYNEERKDGPNDRDNYYNNSFSRKPGGSHHKRPPRPHSGFSNRNRPKFGNNDSSSGFY) is disordered. A compositionally biased stretch (basic and acidic residues) spans 702-714 (NEERKDGPNDRDN). Over residues 725-734 (GGSHHKRPPR) the composition is skewed to basic residues.

Belongs to the polyribonucleotide nucleotidyltransferase family. The cofactor is Mg(2+).

Its subcellular location is the cytoplasm. It carries out the reaction RNA(n+1) + phosphate = RNA(n) + a ribonucleoside 5'-diphosphate. Its function is as follows. Involved in mRNA degradation. Catalyzes the phosphorolysis of single-stranded polyribonucleotides processively in the 3'- to 5'-direction. This Wolbachia pipientis wMel protein is Polyribonucleotide nucleotidyltransferase.